The sequence spans 237 residues: Ribonuclease PH (237 aa).

Phosphate is bound by residues Arg86 and 124-126 (GTR).

It belongs to the RNase PH family. In terms of assembly, homohexameric ring arranged as a trimer of dimers.

It carries out the reaction tRNA(n+1) + phosphate = tRNA(n) + a ribonucleoside 5'-diphosphate. In terms of biological role, phosphorolytic 3'-5' exoribonuclease that plays an important role in tRNA 3'-end maturation. Removes nucleotide residues following the 3'-CCA terminus of tRNAs; can also add nucleotides to the ends of RNA molecules by using nucleoside diphosphates as substrates, but this may not be physiologically important. Probably plays a role in initiation of 16S rRNA degradation (leading to ribosome degradation) during starvation. The protein is Ribonuclease PH of Tolumonas auensis (strain DSM 9187 / NBRC 110442 / TA 4).